An 84-amino-acid polypeptide reads, in one-letter code: MSEFWLCFNCCIAEQPQPKRRRRIDRSMIGEPTNFVHTAHVGSGDLFSGMNSVSSIQNQMQSKGGYGGNMSANVQMQLVDTKAG.

S-palmitoyl cysteine attachment occurs at residues Cys10 and Cys11. The 14-residue stretch at 29–42 (IGEPTNFVHTAHVG) folds into the CRIB domain.

The protein belongs to the CDC42SE/SPEC family.

The protein localises to the cytoplasm. It localises to the cytoskeleton. The protein resides in the cell membrane. Probably involved in the organization of the actin cytoskeleton by acting downstream of CDC42, inducing actin filament assembly. This chain is CDC42 small effector protein 2-A (cdc42se2-A), found in Xenopus tropicalis (Western clawed frog).